The sequence spans 481 residues: Glutamate--tRNA ligase (481 aa).

The short motif at 9-19 is the 'HIGH' region element; the sequence is PSPTGNLHIGT. The Zn(2+) site is built by Cys98, Cys100, His125, and Asp127. Positions 248-252 match the 'KMSKS' region motif; sequence KLSKR. Lys251 contacts ATP.

Belongs to the class-I aminoacyl-tRNA synthetase family. Glutamate--tRNA ligase type 1 subfamily. As to quaternary structure, monomer. Zn(2+) serves as cofactor.

The protein resides in the cytoplasm. It catalyses the reaction tRNA(Glu) + L-glutamate + ATP = L-glutamyl-tRNA(Glu) + AMP + diphosphate. Functionally, catalyzes the attachment of glutamate to tRNA(Glu) in a two-step reaction: glutamate is first activated by ATP to form Glu-AMP and then transferred to the acceptor end of tRNA(Glu). The chain is Glutamate--tRNA ligase from Synechococcus elongatus (strain ATCC 33912 / PCC 7942 / FACHB-805) (Anacystis nidulans R2).